The following is a 150-amino-acid chain: Lipoprotein signal peptidase (150 aa).

2 helical membrane passes run 58 to 78 (FFII…FKST) and 85 to 107 (SFSL…GYVV). Residues aspartate 108 and aspartate 122 contribute to the active site. A helical transmembrane segment spans residues 117 to 137 (VFNLADFFITGGVLLLTFLIL).

Belongs to the peptidase A8 family.

It is found in the cell membrane. It catalyses the reaction Release of signal peptides from bacterial membrane prolipoproteins. Hydrolyzes -Xaa-Yaa-Zaa-|-(S,diacylglyceryl)Cys-, in which Xaa is hydrophobic (preferably Leu), and Yaa (Ala or Ser) and Zaa (Gly or Ala) have small, neutral side chains.. It participates in protein modification; lipoprotein biosynthesis (signal peptide cleavage). Functionally, this protein specifically catalyzes the removal of signal peptides from prolipoproteins. This chain is Lipoprotein signal peptidase, found in Caldicellulosiruptor bescii (strain ATCC BAA-1888 / DSM 6725 / KCTC 15123 / Z-1320) (Anaerocellum thermophilum).